A 143-amino-acid chain; its full sequence is Large ribosomal subunit protein uL15 (143 aa).

Residues 1–47 (MKLHELTPSEGSRFSRRRIGRGDSSGQGKTSGRGQKGQKARGKVRVG) are disordered. Residues 23–35 (DSSGQGKTSGRGQ) are compositionally biased toward gly residues.

It belongs to the universal ribosomal protein uL15 family. In terms of assembly, part of the 50S ribosomal subunit.

Binds to the 23S rRNA. The protein is Large ribosomal subunit protein uL15 of Lactiplantibacillus plantarum (strain ATCC BAA-793 / NCIMB 8826 / WCFS1) (Lactobacillus plantarum).